A 389-amino-acid polypeptide reads, in one-letter code: PqqA peptide cyclase (389 aa).

Residues 19–235 (VGLPLWLLAE…NEYRVRLEAE (217 aa)) form the Radical SAM core domain. The [4Fe-4S] cluster site is built by Cys33, Cys37, and Cys40.

The protein belongs to the radical SAM superfamily. PqqE family. As to quaternary structure, interacts with PqqD. The interaction is necessary for activity of PqqE. Requires [4Fe-4S] cluster as cofactor.

It catalyses the reaction [PQQ precursor protein] + S-adenosyl-L-methionine = E-Y cross-linked-[PQQ precursor protein] + 5'-deoxyadenosine + L-methionine + H(+). The protein operates within cofactor biosynthesis; pyrroloquinoline quinone biosynthesis. In terms of biological role, catalyzes the cross-linking of a glutamate residue and a tyrosine residue in the PqqA protein as part of the biosynthesis of pyrroloquinoline quinone (PQQ). The polypeptide is PqqA peptide cyclase (Pseudomonas savastanoi pv. phaseolicola (strain 1448A / Race 6) (Pseudomonas syringae pv. phaseolicola (strain 1448A / Race 6))).